A 75-amino-acid polypeptide reads, in one-letter code: Small ribosomal subunit protein bS18 (75 aa).

It belongs to the bacterial ribosomal protein bS18 family. As to quaternary structure, part of the 30S ribosomal subunit. Forms a tight heterodimer with protein bS6.

Functionally, binds as a heterodimer with protein bS6 to the central domain of the 16S rRNA, where it helps stabilize the platform of the 30S subunit. The chain is Small ribosomal subunit protein bS18 from Psychrobacter sp. (strain PRwf-1).